The sequence spans 170 residues: NADH-quinone oxidoreductase subunit B (170 aa).

[4Fe-4S] cluster contacts are provided by cysteine 37, cysteine 38, cysteine 102, and cysteine 131.

The protein belongs to the complex I 20 kDa subunit family. As to quaternary structure, NDH-1 is composed of 14 different subunits. Subunits NuoB, C, D, E, F, and G constitute the peripheral sector of the complex. The cofactor is [4Fe-4S] cluster.

The protein localises to the cell inner membrane. The enzyme catalyses a quinone + NADH + 5 H(+)(in) = a quinol + NAD(+) + 4 H(+)(out). Functionally, NDH-1 shuttles electrons from NADH, via FMN and iron-sulfur (Fe-S) centers, to quinones in the respiratory chain. The immediate electron acceptor for the enzyme in this species is believed to be ubiquinone. Couples the redox reaction to proton translocation (for every two electrons transferred, four hydrogen ions are translocated across the cytoplasmic membrane), and thus conserves the redox energy in a proton gradient. The protein is NADH-quinone oxidoreductase subunit B of Geobacter metallireducens (strain ATCC 53774 / DSM 7210 / GS-15).